The sequence spans 78 residues: Large ribosomal subunit protein bL28 (78 aa).

It belongs to the bacterial ribosomal protein bL28 family.

This is Large ribosomal subunit protein bL28 from Pseudoalteromonas atlantica (strain T6c / ATCC BAA-1087).